We begin with the raw amino-acid sequence, 308 residues long: Carbonic anhydrase 6 (308 aa).

Residues 1-17 (MRALVLLLSLFLLGGQA) form the signal peptide. One can recognise an Alpha-carbonic anhydrase domain in the interval 21–278 (SDWTYSEGAL…LNHRVVESNF (258 aa)). Cys-42 and Cys-224 are oxidised to a cystine. Residue Asn-67 is glycosylated (N-linked (GlcNAc...) asparagine). Catalysis depends on His-85, which acts as the Proton donor/acceptor. Residues His-111, His-113, and His-138 each coordinate Zn(2+). Substrate is bound at residue 220-221 (TT). A glycan (N-linked (GlcNAc...) asparagine) is linked at Asn-256.

The protein belongs to the alpha-carbonic anhydrase family. Zn(2+) serves as cofactor. As to expression, major constituent of saliva.

The protein localises to the secreted. The catalysed reaction is hydrogencarbonate + H(+) = CO2 + H2O. Inhibited by coumarins, sulfonamide derivatives such as acetazolamide (AZA), saccharin and Foscarnet (phosphonoformate trisodium salt). Functionally, reversible hydration of carbon dioxide. Its role in saliva is unknown. In Homo sapiens (Human), this protein is Carbonic anhydrase 6 (CA6).